Here is a 376-residue protein sequence, read N- to C-terminus: MVDQNKAFGWAANDESGVLSPFHFSRRENGENDVTVKILFCGVCHSDLHTIKNHWGFSRYPIIPGHEIVGIATKVGKNVTKFKEGDRVGVGVIIGSCQSCESCNQDLENYCPKVVFTYNSRSSDGTSRNQGGYSDVIVVDHRFVLSIPDGLPSDSGAPLLCAGITVYSPMKYYGMTKESGKRLGVNGLGGLGHIAVKIGKAFGLRVTVISRSSEKEREAIDRLGADSFLVTTDSQKMKEAVGTMDFIIDTVSAEHALLPLFSLLKVNGKLVALGLPEKPLDLPIFSLVLGRKMVGGSQIGGMKETQEMLEFCAKHKIVSDIELIKMSDINSAMDRLAKSDVRYRFVIDVANSLLPESSAEILTEQVDHGVSITSRF.

Residue cysteine 44 participates in Zn(2+) binding. Serine 46 serves as a coordination point for NADP(+). 7 residues coordinate Zn(2+): histidine 66, glutamate 67, cysteine 97, cysteine 100, cysteine 103, cysteine 111, and cysteine 161. NADP(+) contacts are provided by residues threonine 165, 187-192, 210-215, threonine 250, glycine 274, and 297-299; these read GLGGLG, SRSSEK, and SQI.

This sequence belongs to the zinc-containing alcohol dehydrogenase family. In terms of assembly, homodimer. Zn(2+) serves as cofactor. Expressed at the base of the stems.

The catalysed reaction is (E)-cinnamyl alcohol + NADP(+) = (E)-cinnamaldehyde + NADPH + H(+). It catalyses the reaction (E)-coniferol + NADP(+) = (E)-coniferaldehyde + NADPH + H(+). It carries out the reaction (E)-sinapyl alcohol + NADP(+) = (E)-sinapaldehyde + NADPH + H(+). The enzyme catalyses (E)-4-coumaroyl alcohol + NADP(+) = (E)-4-coumaraldehyde + NADPH + H(+). The catalysed reaction is (E)-caffeyl alcohol + NADP(+) = (E)-caffeyl aldehyde + NADPH + H(+). The protein operates within aromatic compound metabolism; phenylpropanoid biosynthesis. In terms of biological role, involved in lignin biosynthesis. Catalyzes the final step specific for the production of lignin monomers. Catalyzes the NADPH-dependent reduction of coniferaldehyde, 5-hydroxyconiferaldehyde, sinapaldehyde, 4-coumaraldehyde and caffeyl aldehyde to their respective alcohols. The protein is Cinnamyl alcohol dehydrogenase 2 of Arabidopsis thaliana (Mouse-ear cress).